The sequence spans 130 residues: Immunoglobulin kappa chain variable 9-120 (130 aa).

Residues 1–22 (MDMRAPAQIFGFLLLLFQGTRC) form the signal peptide. Residues 23–45 (DIQMTQSPSSLSASLGERVSLTC) form a framework-1 region. Residues C45 and C110 are joined by a disulfide bond. A complementarity-determining-1 region spans residues 46-56 (RASQDIGSSLN). The framework-2 stretch occupies residues 57–71 (WLQQEPDGTIKRLIY). A complementarity-determining-2 region spans residues 72–78 (ATSSLDS). The segment at 79–110 (GVPKRFSGSRSGSDYSLTISSLESEDFVDYYC) is framework-3. The tract at residues 111-119 (LQYASSPWT) is complementarity-determining-3. Residues 120 to 129 (FGGGTKLEIK) form a framework-4 region.

In Mus musculus (Mouse), this protein is Immunoglobulin kappa chain variable 9-120.